A 146-amino-acid chain; its full sequence is Large ribosomal subunit protein uL15 (146 aa).

The disordered stretch occupies residues Met1 to Pro46. Over residues Gly29–Lys43 the composition is skewed to low complexity.

Belongs to the universal ribosomal protein uL15 family. Part of the 50S ribosomal subunit.

In terms of biological role, binds to the 23S rRNA. The polypeptide is Large ribosomal subunit protein uL15 (Cutibacterium acnes (strain DSM 16379 / KPA171202) (Propionibacterium acnes)).